Here is a 515-residue protein sequence, read N- to C-terminus: MKEAGQMQNLESARAGRSVSTQTGSMTGQIPRLSKVNLFTLLSLWMELFPAVEAQRQKSQKNEEGKHGPLGDNEEMTRVSTDKRQVKRTGLVVVKNMKIVGLHCSSEDLHAGQIALIKHGSRLKNCDLYFSRKPCSACLKMIVNAGVNRISYWPADPEISLLTEASSSEDAKLDAKAVERLKSNSRAHVCVLLQPLVCYMVQFVEETSYKCDFIQKITKTLPDANTDFYYERKQERIKEYEMLFLVSNEEMHKQILMTIGLENLCENPYFSNLRQNMKDLILLLATVASSVPNFKHFGFYRSNPEQINEIHNQSLPQEIARHCMVQARLLAYRTEDHKTGVGAVIWAEGKSRSCDGTGAMYFVGCGYNAFPVGSEYADFPHMDDKQKDREIRKFRYIIHAERNALTFRCQEIKPEERSMIFVTKCPCDECVPLIKGAGIKQIYAGDVDVGKKKADISYMRFGELEGVSKFTWQLNPSGAYGLEQNEPERRENGVLRPVPQKEEQHQDKKLCLGIH.

Polar residues-rich tracts occupy residues 1-11 (MKEAGQMQNLE) and 18-27 (SVSTQTGSMT). Disordered regions lie at residues 1–27 (MKEAGQMQNLESARAGRSVSTQTGSMT) and 56–83 (RQKSQKNEEGKHGPLGDNEEMTRVSTDK). Residues 60-83 (QKNEEGKHGPLGDNEEMTRVSTDK) show a composition bias toward basic and acidic residues. The 99-residue stretch at 71–169 (GDNEEMTRVS…SLLTEASSSE (99 aa)) folds into the CMP/dCMP-type deaminase 1 domain. Residues His110, Cys135, and Cys138 each coordinate Zn(2+). Residues 272–284 (NLRQNMKDLILLL) carry the Nuclear export signal motif. Positions 318-483 (EIARHCMVQA…LNPSGAYGLE (166 aa)) constitute a CMP/dCMP-type deaminase 2 domain. His399 is a binding site for Zn(2+). The active-site Proton donor is Glu401. Positions 427 and 430 each coordinate Zn(2+). The Bipartite nuclear localization signal signature appears at 489–511 (RRENGVLRPVPQKEEQHQDKKLC). The tract at residues 494–515 (VLRPVPQKEEQHQDKKLCLGIH) is disordered.

This sequence belongs to the cytidine and deoxycytidylate deaminase family. It depends on Zn(2+) as a cofactor.

It is found in the cytoplasm. The protein localises to the nucleus. The enzyme catalyses 2'-deoxycytidine + H2O + H(+) = 2'-deoxyuridine + NH4(+). It catalyses the reaction cytidine + H2O + H(+) = uridine + NH4(+). Its function is as follows. Catalyzes the deamination of cytidine and deoxycytidine into uridine and deoxyuridine, respectively. May play an important role in testicular development and spermatogenesis. The polypeptide is Cytidine and dCMP deaminase domain-containing protein 1 (CDADC1) (Pongo abelii (Sumatran orangutan)).